We begin with the raw amino-acid sequence, 442 residues long: Proline--tRNA ligase (442 aa).

This sequence belongs to the class-II aminoacyl-tRNA synthetase family. ProS type 2 subfamily. In terms of assembly, homodimer.

It localises to the cytoplasm. The enzyme catalyses tRNA(Pro) + L-proline + ATP = L-prolyl-tRNA(Pro) + AMP + diphosphate. Its function is as follows. Catalyzes the attachment of proline to tRNA(Pro) in a two-step reaction: proline is first activated by ATP to form Pro-AMP and then transferred to the acceptor end of tRNA(Pro). The polypeptide is Proline--tRNA ligase (Mesorhizobium japonicum (strain LMG 29417 / CECT 9101 / MAFF 303099) (Mesorhizobium loti (strain MAFF 303099))).